We begin with the raw amino-acid sequence, 188 residues long: Elongation factor P (188 aa).

The protein belongs to the elongation factor P family.

It is found in the cytoplasm. It participates in protein biosynthesis; polypeptide chain elongation. Involved in peptide bond synthesis. Stimulates efficient translation and peptide-bond synthesis on native or reconstituted 70S ribosomes in vitro. Probably functions indirectly by altering the affinity of the ribosome for aminoacyl-tRNA, thus increasing their reactivity as acceptors for peptidyl transferase. The chain is Elongation factor P from Methylorubrum populi (strain ATCC BAA-705 / NCIMB 13946 / BJ001) (Methylobacterium populi).